The chain runs to 112 residues: Diuretic hormone class 2 (112 aa).

Positions 1-24 (MVRATCLLASCVLFALLLIVPASA) are cleaved as a signal peptide. The propeptide occupies 25–71 (YPRYPSNYFREEGQYEPEEIMDMLNRLGNLIQMERKMENYKEDITSE). A Proline amide modification is found at Pro-104. A propeptide spanning residues 108–112 (RRDAH) is cleaved from the precursor.

As to expression, expressed in corpora cardiaca (CC), corpora allata (CA), antennal lobe (AL) and gnathal ganglion (GNG) (at protein level). Expression in CC, CA and AL detected in most animals, expression in GNG in few animals (at protein level).

The protein resides in the secreted. Functionally, regulation of fluid secretion. Stimulates Malpighian tubule fluid secretion. In Agrotis ipsilon (Black cutworm moth), this protein is Diuretic hormone class 2.